The primary structure comprises 250 residues: Pyridoxine 5'-phosphate synthase (250 aa).

A 3-amino-2-oxopropyl phosphate-binding site is contributed by Asn-11. Residue 13 to 14 (DH) participates in 1-deoxy-D-xylulose 5-phosphate binding. Arg-22 contacts 3-amino-2-oxopropyl phosphate. The active-site Proton acceptor is His-47. Positions 49 and 54 each coordinate 1-deoxy-D-xylulose 5-phosphate. The active-site Proton acceptor is Glu-74. Position 104 (Thr-104) interacts with 1-deoxy-D-xylulose 5-phosphate. The Proton donor role is filled by His-198. 3-amino-2-oxopropyl phosphate is bound by residues Gly-199 and 220-221 (GY).

It belongs to the PNP synthase family. As to quaternary structure, homooctamer; tetramer of dimers.

It localises to the cytoplasm. It carries out the reaction 3-amino-2-oxopropyl phosphate + 1-deoxy-D-xylulose 5-phosphate = pyridoxine 5'-phosphate + phosphate + 2 H2O + H(+). It functions in the pathway cofactor biosynthesis; pyridoxine 5'-phosphate biosynthesis; pyridoxine 5'-phosphate from D-erythrose 4-phosphate: step 5/5. Catalyzes the complicated ring closure reaction between the two acyclic compounds 1-deoxy-D-xylulose-5-phosphate (DXP) and 3-amino-2-oxopropyl phosphate (1-amino-acetone-3-phosphate or AAP) to form pyridoxine 5'-phosphate (PNP) and inorganic phosphate. The protein is Pyridoxine 5'-phosphate synthase of Bradyrhizobium diazoefficiens (strain JCM 10833 / BCRC 13528 / IAM 13628 / NBRC 14792 / USDA 110).